A 138-amino-acid polypeptide reads, in one-letter code: Ribosome-binding factor A (138 aa).

The protein belongs to the RbfA family. Monomer. Binds 30S ribosomal subunits, but not 50S ribosomal subunits or 70S ribosomes.

Its subcellular location is the cytoplasm. One of several proteins that assist in the late maturation steps of the functional core of the 30S ribosomal subunit. Associates with free 30S ribosomal subunits (but not with 30S subunits that are part of 70S ribosomes or polysomes). Required for efficient processing of 16S rRNA. May interact with the 5'-terminal helix region of 16S rRNA. The chain is Ribosome-binding factor A from Bradyrhizobium sp. (strain BTAi1 / ATCC BAA-1182).